We begin with the raw amino-acid sequence, 303 residues long: Monoglyceride lipase (303 aa).

Thr-10 is modified (phosphothreonine). Tyr-58 carries the 3'-nitrotyrosine modification. Residue Ser-122 is the Nucleophile of the active site. Phosphoserine is present on Ser-189. Residues Asp-239 and His-269 each act as charge relay system in the active site.

It belongs to the AB hydrolase superfamily. Monoacylglycerol lipase family. Homodimer. In terms of tissue distribution, ubiquitous.

Its subcellular location is the cytoplasm. The protein resides in the cytosol. It localises to the membrane. It carries out the reaction Hydrolyzes glycerol monoesters of long-chain fatty acids.. It catalyses the reaction a 1-acylglycerol + H2O = glycerol + a fatty acid + H(+). The catalysed reaction is a 2-acylglycerol + H2O = glycerol + a fatty acid + H(+). The enzyme catalyses 2-(5Z,8Z,11Z,14Z-eicosatetraenoyl)-glycerol + H2O = glycerol + (5Z,8Z,11Z,14Z)-eicosatetraenoate + H(+). It carries out the reaction 1-octanoylglycerol + H2O = octanoate + glycerol + H(+). It catalyses the reaction 1-decanoylglycerol + H2O = decanoate + glycerol + H(+). The catalysed reaction is 1-dodecanoylglycerol + H2O = dodecanoate + glycerol + H(+). The enzyme catalyses 1-tetradecanoylglycerol + H2O = tetradecanoate + glycerol + H(+). It carries out the reaction 2-hexadecanoylglycerol + H2O = glycerol + hexadecanoate + H(+). It catalyses the reaction 1-(9Z-octadecenoyl)-glycerol + H2O = glycerol + (9Z)-octadecenoate + H(+). The catalysed reaction is 2-(9Z-octadecenoyl)-glycerol + H2O = glycerol + (9Z)-octadecenoate + H(+). The enzyme catalyses 2-(9Z,12Z-octadecadienoyl)-glycerol + H2O = (9Z,12Z)-octadecadienoate + glycerol + H(+). It carries out the reaction 1-(5Z,8Z,11Z,14Z-eicosatetraenoyl)-glycerol + H2O = glycerol + (5Z,8Z,11Z,14Z)-eicosatetraenoate + H(+). It catalyses the reaction 1-(9Z,12Z-octadecadienoyl)-glycerol + H2O = (9Z,12Z)-octadecadienoate + glycerol + H(+). The catalysed reaction is 1-hexadecanoylglycerol + H2O = glycerol + hexadecanoate + H(+). The enzyme catalyses 1-octadecanoylglycerol + H2O = octadecanoate + glycerol + H(+). It carries out the reaction prostaglandin E2 1-glyceryl ester + H2O = prostaglandin E2 + glycerol + H(+). It catalyses the reaction prostaglandin D2-1-glycerol ester + H2O = prostaglandin D2 + glycerol + H(+). The catalysed reaction is 2-glyceryl-15-deoxy-Delta(12,14)-prostaglandin J2 + H2O = 15-deoxy-Delta(12,14)-prostaglandin J2 + glycerol + H(+). The enzyme catalyses prostaglandin F2alpha 1-glyceryl ester + H2O = prostaglandin F2alpha + glycerol + H(+). Its pathway is glycerolipid metabolism; triacylglycerol degradation. In terms of biological role, converts monoacylglycerides to free fatty acids and glycerol. Hydrolyzes the endocannabinoid 2-arachidonoylglycerol, and thereby contributes to the regulation of endocannabinoid signaling, nociperception and perception of pain. Regulates the levels of fatty acids that serve as signaling molecules and promote cancer cell migration, invasion and tumor growth. The protein is Monoglyceride lipase of Mus musculus (Mouse).